Here is a 952-residue protein sequence, read N- to C-terminus: Glycine dehydrogenase (decarboxylating) (952 aa).

Lys696 bears the N6-(pyridoxal phosphate)lysine mark.

This sequence belongs to the GcvP family. The glycine cleavage system is composed of four proteins: P, T, L and H. It depends on pyridoxal 5'-phosphate as a cofactor.

It catalyses the reaction N(6)-[(R)-lipoyl]-L-lysyl-[glycine-cleavage complex H protein] + glycine + H(+) = N(6)-[(R)-S(8)-aminomethyldihydrolipoyl]-L-lysyl-[glycine-cleavage complex H protein] + CO2. In terms of biological role, the glycine cleavage system catalyzes the degradation of glycine. The P protein binds the alpha-amino group of glycine through its pyridoxal phosphate cofactor; CO(2) is released and the remaining methylamine moiety is then transferred to the lipoamide cofactor of the H protein. This is Glycine dehydrogenase (decarboxylating) from Pelagibacter ubique (strain HTCC1062).